We begin with the raw amino-acid sequence, 203 residues long: Glycerol-3-phosphate acyltransferase (203 aa).

The next 5 helical transmembrane spans lie at 13 to 33 (TLAC…LILT), 62 to 82 (LAAA…AIAS), 88 to 108 (AGIA…WLSF), 118 to 138 (IGVL…IWLA), and 159 to 179 (IALY…MTAI).

The protein belongs to the PlsY family. As to quaternary structure, probably interacts with PlsX.

It is found in the cell inner membrane. It carries out the reaction an acyl phosphate + sn-glycerol 3-phosphate = a 1-acyl-sn-glycero-3-phosphate + phosphate. It functions in the pathway lipid metabolism; phospholipid metabolism. In terms of biological role, catalyzes the transfer of an acyl group from acyl-phosphate (acyl-PO(4)) to glycerol-3-phosphate (G3P) to form lysophosphatidic acid (LPA). This enzyme utilizes acyl-phosphate as fatty acyl donor, but not acyl-CoA or acyl-ACP. The polypeptide is Glycerol-3-phosphate acyltransferase (Rhizobium meliloti (strain 1021) (Ensifer meliloti)).